Here is a 276-residue protein sequence, read N- to C-terminus: Myoblast determination protein 1 homolog 1 (276 aa).

The region spanning 84 to 135 (DRRKAATMRERRRLSKVNDAFETLKRCTSTNPNQRLPKVDILRNAISYIESL) is the bHLH domain. Residues 228 to 253 (CPAVQDGSEGSSPCSPGDGSIASENG) are disordered.

As to quaternary structure, efficient DNA binding requires dimerization with another bHLH protein.

The protein localises to the nucleus. Its function is as follows. May act as a transcriptional activator that promotes transcription of muscle-specific target genes and plays a role in muscle differentiation. This is Myoblast determination protein 1 homolog 1 (myod1) from Oncorhynchus mykiss (Rainbow trout).